Consider the following 62-residue polypeptide: Large ribosomal subunit protein uL29 (62 aa).

This sequence belongs to the universal ribosomal protein uL29 family.

The sequence is that of Large ribosomal subunit protein uL29 from Acholeplasma laidlawii (strain PG-8A).